We begin with the raw amino-acid sequence, 193 residues long: Acyl carrier protein phosphodiesterase (193 aa).

Belongs to the AcpH family.

It catalyses the reaction holo-[ACP] + H2O = apo-[ACP] + (R)-4'-phosphopantetheine + H(+). Converts holo-ACP to apo-ACP by hydrolytic cleavage of the phosphopantetheine prosthetic group from ACP. The protein is Acyl carrier protein phosphodiesterase of Shigella boydii serotype 18 (strain CDC 3083-94 / BS512).